Here is a 187-residue protein sequence, read N- to C-terminus: UPF0301 protein lpl0620 (187 aa).

The protein belongs to the UPF0301 (AlgH) family.

In Legionella pneumophila (strain Lens), this protein is UPF0301 protein lpl0620.